Reading from the N-terminus, the 700-residue chain is MSSDNGSGRQGGDRGGSTGYNLLMYLGFGAIIATLVALYVLQMFQTSLDYTDLERLVAASQYEKDESKLTAGSPGYIDVKVEARNTLRRMRVSNLRKVELGPTAVRGQIDLVELKPVGTSGDRWEPDSKTLRQNVEFRTNLSDKGSNRDDIETAIRNSNIPFRHADPPGPWEQHSQLIIGMLLAAMLIYIVVRRLSAAGSPMSFGRSRGKLYAQEELGITFNDVAGIDEAVEEVREVVDFLRSPEKYQKLGGRIPKGVLLVGPPGTGKTLLAKAIAGEAGVPFFSLSGSDFVEMFVGVGAARVRDMFQQAEAKAPCIIFIDELDALGKSRGAGIMGGHDEREQTLNALLVEMDGFGSNSGVIVMAATNRPETLDPALLRPGRFDRHVLVDRPDIKGREDILKVHVKNVKLDPTVDLHKVAAITPGFVGADLANLVNEAALLAARAEKTAVGMNEFNEGVERVTAGLEKKQRVMNEDEKLRVAYHESGHALVAYSLPNTDPVHKVSIIPRGLAALGYTMQRPEGDRFLMTQSELESRIQVLLAGTIAEEIIFTDISTGAQNDLERATDIARRMCMEFGMSRLGRVNYRESNRSAFLASGGSGEERVRSVSEQTLREIDQEVRRIIDESIEKVRHILDVRRGALVSLTNRLMEVESVDSDELKRIIDETSPGPLVVPGTLPANTMRSTTEPVITAPATERSG.

Residues 1-20 (MSSDNGSGRQGGDRGGSTGY) lie on the Cytoplasmic side of the membrane. A helical membrane pass occupies residues 21 to 41 (NLLMYLGFGAIIATLVALYVL). Over 42–171 (QMFQTSLDYT…FRHADPPGPW (130 aa)) the chain is Periplasmic. Residues 172 to 192 (EQHSQLIIGMLLAAMLIYIVV) traverse the membrane as a helical segment. Residues 193-700 (RRLSAAGSPM…ITAPATERSG (508 aa)) lie on the Cytoplasmic side of the membrane. ATP is bound at residue 262 to 269 (GPPGTGKT). Zn(2+) is bound at residue H484. E485 is an active-site residue. The Zn(2+) site is built by H488 and D561.

This sequence in the central section; belongs to the AAA ATPase family. In the C-terminal section; belongs to the peptidase M41 family. Homohexamer. The cofactor is Zn(2+).

It is found in the cell inner membrane. Its function is as follows. Acts as a processive, ATP-dependent zinc metallopeptidase for both cytoplasmic and membrane proteins. Plays a role in the quality control of integral membrane proteins. The chain is ATP-dependent zinc metalloprotease FtsH from Pirellula staleyi (strain ATCC 27377 / DSM 6068 / ICPB 4128) (Pirella staleyi).